The primary structure comprises 562 residues: Cell division protein FtsZ (562 aa).

Residues 23–27 (GAGGN), 110–112 (GTG), glutamate 141, arginine 145, and aspartate 189 contribute to the GTP site. Positions 404–413 (PAAARPAQQP) are enriched in low complexity. Disordered regions lie at residues 404-428 (PAAA…RLDP) and 462-562 (ETAQ…RQAN). The span at 418-428 (FRPDPQLRLDP) shows a compositional bias: basic and acidic residues. Composition is skewed to low complexity over residues 464–486 (AQAA…QPQR) and 500–510 (GLLRRPAAAQP).

Belongs to the FtsZ family. As to quaternary structure, homodimer. Polymerizes to form a dynamic ring structure in a strictly GTP-dependent manner. Interacts directly with several other division proteins. Interacts with FtsZ-like protein (also called FtsZm).

It localises to the cytoplasm. In terms of biological role, essential cell division protein that forms a contractile ring structure (Z ring) at the future cell division site. The regulation of the ring assembly controls the timing and the location of cell division. One of the functions of the FtsZ ring is to recruit other cell division proteins to the septum to produce a new cell wall between the dividing cells. Binds GTP and shows GTPase activity. Mild overexpression impairs cell division, leading to very elongated cells. Isolated protein forms filaments and bundles in the presence of GTP. The chain is Cell division protein FtsZ from Magnetospirillum gryphiswaldense (strain DSM 6361 / JCM 21280 / NBRC 15271 / MSR-1).